Reading from the N-terminus, the 326-residue chain is MNRIGYIGSKLKLKDWIFEEISKRTDDTYTKFADLFAGSCIMTHEALEKKYECISNDLETYSYVIMNGLKCPFSDKLQNIIETLDDLDTKDMVIPGFVTLTYSPRGNRMYFTEDNAMRIDIIRENIERMKERVSTDEYNFLLASLLTSADSVKNTSVVYGAYLKKFKKTALKRMVFAPLHTRSTTVTLETFNEDATELGIKTDIAYVDPPYNSRQYGANYFVLNQILTPKEIGNGVTGLPEYKKSSFCRKQEVAMSFHKMLKNVSARLFVISYSSESLLSKGDMVALLSQYGKCEVVVRNHKRFKAQISAVGNDVEEYLFFVYIEQ.

Belongs to the N(4)/N(6)-methyltransferase family.

The catalysed reaction is a 2'-deoxyadenosine in DNA + S-adenosyl-L-methionine = an N(6)-methyl-2'-deoxyadenosine in DNA + S-adenosyl-L-homocysteine + H(+). Its function is as follows. An alpha subtype methylase that recognizes the double-stranded sequence 5'-CATG-3', methylates A-2 on both strands and protects the DNA from cleavage by the CviAII endonuclease. This is Type II methyltransferase M.CviAII (CVIAIIM) from Paramecium bursaria Chlorella virus 1 (PBCV-1).